We begin with the raw amino-acid sequence, 224 residues long: UPF0758 protein PST_0473 (224 aa).

The 123-residue stretch at 102–224 (ALESPQAVRD…PLSMAEYGWM (123 aa)) folds into the MPN domain. 3 residues coordinate Zn(2+): histidine 173, histidine 175, and aspartate 186. The JAMM motif motif lies at 173-186 (HNHPSGVAEPSQAD).

The protein belongs to the UPF0758 family.

The polypeptide is UPF0758 protein PST_0473 (Stutzerimonas stutzeri (strain A1501) (Pseudomonas stutzeri)).